The sequence spans 549 residues: Cation/acetate symporter ActP (549 aa).

A run of 13 helical transmembrane segments spans residues 33–53, 77–97, 103–123, 148–168, 183–203, 206–226, 262–282, 303–323, 355–375, 404–424, 428–448, 464–484, and 493–513; these read WQAI…TYWA, LAIA…ALVF, GLIY…LIAE, ILSA…QMVG, IAVV…GMLA, WVQI…AFMV, ISAL…PHIL, GFMG…IMLV, LFLG…VAGL, VSKI…MLFE, IAFM…PIIL, GGWL…TIWV, and IFPY…GIWF.

It belongs to the sodium:solute symporter (SSF) (TC 2.A.21) family.

The protein resides in the cell inner membrane. Its function is as follows. Transports acetate. The polypeptide is Cation/acetate symporter ActP (Shigella boydii serotype 4 (strain Sb227)).